Reading from the N-terminus, the 259-residue chain is Phosphatidylglycerol--prolipoprotein diacylglyceryl transferase (259 aa).

The next 4 membrane-spanning stretches (helical) occupy residues 12–32 (LSLHWYAVCILVGLLLAVYLA), 46–66 (IIDFILIAFPLAIIGARIYYV), 83–103 (IWNGGIAIYGGLITGTIVLFV), and 109–129 (VLNPIHFLDIAAPSVMLAQAI). R131 is a binding site for a 1,2-diacyl-sn-glycero-3-phospho-(1'-sn-glycerol). 3 consecutive transmembrane segments (helical) span residues 167-187 (VPTFLYESMWNLIGFVIIMVW), 194-214 (LLDGDIISFYLIWYGCGRLVI), and 226-246 (GIRVSQYVSVLLIIIAIVFIF).

It belongs to the Lgt family.

The protein localises to the cell membrane. It carries out the reaction L-cysteinyl-[prolipoprotein] + a 1,2-diacyl-sn-glycero-3-phospho-(1'-sn-glycerol) = an S-1,2-diacyl-sn-glyceryl-L-cysteinyl-[prolipoprotein] + sn-glycerol 1-phosphate + H(+). The protein operates within protein modification; lipoprotein biosynthesis (diacylglyceryl transfer). Its function is as follows. Catalyzes the transfer of the diacylglyceryl group from phosphatidylglycerol to the sulfhydryl group of the N-terminal cysteine of a prolipoprotein, the first step in the formation of mature lipoproteins. This chain is Phosphatidylglycerol--prolipoprotein diacylglyceryl transferase, found in Streptococcus equi subsp. zooepidemicus (strain H70).